The sequence spans 29 residues: Dermaseptin-1.2TR (29 aa).

V29 bears the Valine amide mark.

In terms of tissue distribution, expressed by the skin glands.

It localises to the secreted. Its function is as follows. Has antimicrobial activity. The protein is Dermaseptin-1.2TR of Phyllomedusa trinitatis (Trinidad leaf frog).